The following is a 237-amino-acid chain: Protein PetR (237 aa).

A Response regulatory domain is found at 8 to 121 (HLLIVDDDER…ELLLRINAIL (114 aa)). The residue at position 57 (Asp-57) is a 4-aspartylphosphate. Residues 77 to 95 (ATPILLLTARGETRERIEG) constitute a DNA-binding region (H-T-H motif). The ompR/PhoB-type DNA-binding region spans 132–236 (PKYLSLGPLR…VRGLGYMLAP (105 aa)).

Its function is as follows. Necessary for photosynthetic and respiratory growth. Probable promoter-specific protein mediating the interaction between DNA and RNA polymerase. This chain is Protein PetR (petR), found in Rhodobacter capsulatus (strain ATCC BAA-309 / NBRC 16581 / SB1003).